The chain runs to 140 residues: MCLNIFRTFKSYFGCNITFVPKESALVGIGGCIGSVARYQINEWIPSLLGTFIVNVLGCIAIGFLMYESIYFGAFSRNSRLFLGAGLIGSFTTFSAFATQTIEAGLFYGIIFIAANILCGLMGVFIGRQIILRGRRSWNI.

3 helical membrane passes run 45-65, 82-102, and 106-126; these read IPSL…IGFL, FLGA…TQTI, and LFYG…GVFI. Residues Gly-89 and Thr-92 each coordinate Na(+).

It belongs to the fluoride channel Fluc/FEX (TC 1.A.43) family.

It is found in the cell membrane. It carries out the reaction fluoride(in) = fluoride(out). With respect to regulation, na(+) is not transported, but it plays an essential structural role and its presence is essential for fluoride channel function. Fluoride-specific ion channel. Important for reducing fluoride concentration in the cell, thus reducing its toxicity. This Methanospirillum hungatei JF-1 (strain ATCC 27890 / DSM 864 / NBRC 100397 / JF-1) protein is Fluoride-specific ion channel FluC 1.